We begin with the raw amino-acid sequence, 393 residues long: Prokineticin receptor 1 (393 aa).

The Extracellular segment spans residues 1 to 62 (METTVGALGE…TNSRTFFAAK (62 aa)). The N-linked (GlcNAc...) asparagine glycan is linked to Asn-11. Residues 63–83 (IVIGMALVGIMLVCGIGNFIF) traverse the membrane as a helical segment. The Cytoplasmic segment spans residues 84–98 (ITALARYKKLRNLTN). Residues 99–119 (LLIANLAISDFLVAIVCCPFE) form a helical membrane-spanning segment. Residues 120 to 146 (MDYYVVRQLSWEHGHVLCASVNYLRTV) are Extracellular-facing. A disulfide bond links Cys-137 and Cys-217. The chain crosses the membrane as a helical span at residues 147–167 (SLYVSTNALLAIAIDRYLAIV). Residues 168–179 (HPLRPRMKCQTA) lie on the Cytoplasmic side of the membrane. The chain crosses the membrane as a helical span at residues 180–200 (AGLIFLVWSVSILIAIPAAYF). The Extracellular segment spans residues 201-232 (TTETVLVIVERQEKIFCGQIWPVDQQFYYRSY). A helical transmembrane segment spans residues 233–253 (FLLVFGLEFVGPVVAMTLCYA). Residues 254–282 (RVSRELWFKAVPGFQTEQIRRRLRCRRRT) are Cytoplasmic-facing. The helical transmembrane segment at 283-303 (VLGLVCVLSAYVLCWAPFYGF) threads the bilayer. The Extracellular segment spans residues 304 to 322 (TIVRDFFPSVFVKEKHYLT). Residues 323–343 (AFYVVECIAMSNSMINTLCFV) traverse the membrane as a helical segment. At 344–393 (TVRNNTSKYLKRILRLQWRASPSGSKASADLDLRTTGIPATEEVDCIRLK) the chain is on the cytoplasmic side.

The protein belongs to the G-protein coupled receptor 1 family. In terms of tissue distribution, expressed at high levels in the heart, skeletal muscle and pancreas. Expressed at lower levels in the brain, lung, liver and kidney.

It localises to the cell membrane. Receptor for prokineticin 1. Exclusively coupled to the G(q) subclass of heteromeric G proteins. Activation leads to mobilization of calcium, stimulation of phosphoinositide turnover and activation of p44/p42 mitogen-activated protein kinase. May play a role during early pregnancy. This Mus musculus (Mouse) protein is Prokineticin receptor 1 (Prokr1).